The following is a 148-amino-acid chain: Mediator of RNA polymerase II transcription subunit 31 (148 aa).

This sequence belongs to the Mediator complex subunit 31 family. In terms of assembly, component of the Mediator complex.

It localises to the nucleus. Its function is as follows. Component of the Mediator complex, a coactivator involved in the regulated transcription of nearly all RNA polymerase II-dependent genes. Mediator functions as a bridge to convey information from gene-specific regulatory proteins to the basal RNA polymerase II transcription machinery. Mediator is recruited to promoters by direct interactions with regulatory proteins and serves as a scaffold for the assembly of a functional preinitiation complex with RNA polymerase II and the general transcription factors. This Taenia solium (Pork tapeworm) protein is Mediator of RNA polymerase II transcription subunit 31.